A 201-amino-acid chain; its full sequence is Oligoribonuclease (201 aa).

Residues 20–183 (LVWLDMEMTG…ADIHESIDEL (164 aa)) form the Exonuclease domain. Residue Tyr-141 is part of the active site.

It belongs to the oligoribonuclease family.

The protein localises to the cytoplasm. Functionally, 3'-to-5' exoribonuclease specific for small oligoribonucleotides. In Burkholderia pseudomallei (strain 1106a), this protein is Oligoribonuclease.